The sequence spans 1550 residues: Cellulose synthase 1 (1550 aa).

Residues 1–741 (MPEVRSSTQS…KERVLKGTVK (741 aa)) form a catalytic region. The next 3 helical transmembrane spans lie at 26 to 46 (GAGL…TSVT), 47 to 67 (LPPE…FIVG), and 106 to 126 (GLLG…LFLS). The tract at residues 147–240 (EWPTVDIFVP…YILIFDCDHV (94 aa)) is catalytic subdomain A. Residue Asp189 is part of the active site. Positions 236 and 238 each coordinate substrate. The interval 317 to 377 (TAIEQIGGFA…GQRVRWARGM (61 aa)) is catalytic subdomain B. Residue Asp333 is part of the active site. A run of 5 helical transmembrane segments spans residues 398 to 418 (LCYL…IFLS), 423 to 443 (FLFF…AYAI), 468 to 488 (VYET…LLSP), 507 to 527 (FDLG…GGLA), and 547 to 567 (LLNS…IAVG). The region spanning 572–647 (QKRNSHRIPA…PARIIRAGNG (76 aa)) is the PilZ domain. Disordered regions lie at residues 711 to 734 (SSPT…RKER) and 768 to 813 (APAH…QPLA). A cyclic di-GMP binding domain region spans residues 742–1550 (MVSLLALLTF…KQLEDERRKS (809 aa)). Residues 768-796 (APAHQPEASDLPPLPALLPATSGAAQAGA) are compositionally biased toward low complexity. A helical transmembrane segment spans residues 1513-1533 (VLLVGLLGCILIVSVLARALA).

It in the N-terminal section; belongs to the glycosyltransferase 2 family. In the C-terminal section; belongs to the AcsB/BcsB family. Mg(2+) is required as a cofactor.

It is found in the cell inner membrane. It carries out the reaction [(1-&gt;4)-beta-D-glucosyl](n) + UDP-alpha-D-glucose = [(1-&gt;4)-beta-D-glucosyl](n+1) + UDP + H(+). It functions in the pathway glycan metabolism; bacterial cellulose biosynthesis. Activated by c-di-GMP. Bifunctional protein comprised of a catalytic subunit and a regulatory subunit. The catalytic subunit of cellulose synthase polymerizes uridine 5'-diphosphate glucose to cellulose in a processive way. The thick cellulosic mats generated by this enzyme probably provide a specialized protective environment to the bacterium. The regulatory subunit binds bis-(3'-5') cyclic diguanylic acid (c-di-GMP). The polypeptide is Cellulose synthase 1 (acsAB) (Komagataeibacter xylinus (Gluconacetobacter xylinus)).